The chain runs to 187 residues: Protein P18, mitochondrial (187 aa).

The transit peptide at 1–17 directs the protein to the mitochondrion; it reads MRRLSSQLMCTAAAVRF. Positions 160-187 are disordered; it reads NAAKAKADGKEHPSTLAQQQSLFDIKIQ.

The protein resides in the mitochondrion inner membrane. Functionally, putative RNA-binding protein. The protein is Protein P18, mitochondrial of Leishmania tarentolae (Sauroleishmania tarentolae).